The following is a 321-amino-acid chain: Putative membrane-bound redox modulator Alx (321 aa).

Residues 1–6 (MNTVGT) lie on the Periplasmic side of the membrane. The helical transmembrane segment at 7–27 (PLLWGGFAVVVAIMLAIDLLL) threads the bilayer. The Cytoplasmic segment spans residues 28–43 (QGRRGAHAMTMKQAAA). Residues 44–64 (WSLVWVTLSLLFNAAFWWYLV) traverse the membrane as a helical segment. The Periplasmic segment spans residues 65–89 (QTEGRAVADPQALAFLTGYLIEKSL). A helical transmembrane segment spans residues 90-110 (AVDNVFVWLMLFSYFSVPAAL). Residues 111–113 (QRR) lie on the Cytoplasmic side of the membrane. Residues 114–134 (VLVYGVLGAIVLRTIMIFTGS) traverse the membrane as a helical segment. Position 135 (Trp135) is a topological domain, periplasmic. The chain crosses the membrane as a helical span at residues 136–156 (LISQFDWILYIFGAFLLFTGV). Residues 157 to 198 (KMALAHEDESGIGDKPLVRWLRGHLRMTDTIDNEHFFVRKNG) lie on the Cytoplasmic side of the membrane. A helical transmembrane segment spans residues 199–219 (LLYATPLMLVLILVELSDVIF). At 220 to 225 (AVDSIP) the chain is on the periplasmic side. The helical transmembrane segment at 226-246 (AIFAVTTDPFIVLTSNLFAIL) threads the bilayer. Residues 247–261 (GLRAMYFLLAGVAER) lie on the Cytoplasmic side of the membrane. A helical transmembrane segment spans residues 262–282 (FSMLKYGLAVILVFIGIKMLI). The Periplasmic portion of the chain corresponds to 283–286 (VDFY). The chain crosses the membrane as a helical span at residues 287–307 (HIPIAVSLGVVFGILVMTFII). Topologically, residues 308–321 (NAWVNYRHDKQRGG) are cytoplasmic.

Belongs to the TerC family.

It is found in the cell inner membrane. Its function is as follows. Has been proposed to be a redox modulator. The protein is Putative membrane-bound redox modulator Alx of Escherichia coli (strain K12).